The sequence spans 129 residues: Sigma factor-binding protein Crl (129 aa).

Residues 99–119 are essential for activity; it reads TQNCFHLKLVKTLEENFQLSV.

Belongs to the Crl family.

Its subcellular location is the cytoplasm. Its function is as follows. Binds to the sigma-S subunit of RNA polymerase, activating expression of sigma-S-regulated genes. Stimulates RNA polymerase holoenzyme formation and may bind to several other sigma factors, such as sigma-70 and sigma-32. This Vibrio vulnificus (strain CMCP6) protein is Sigma factor-binding protein Crl.